The following is a 63-amino-acid chain: 2-hydroxymuconate tautomerase (63 aa).

P2 acts as the Proton acceptor; via imino nitrogen in catalysis.

Belongs to the 4-oxalocrotonate tautomerase family. As to quaternary structure, homohexamer.

The enzyme catalyses (2Z,4E)-2-hydroxyhexa-2,4-dienedioate = (3E)-2-oxohex-3-enedioate. The protein operates within aromatic compound metabolism; salicylate degradation. Functionally, catalyzes the ketonization of 2-hydroxymuconate stereoselectively to yield 2-oxo-3-hexenedioate. In Pseudomonas putida (Arthrobacter siderocapsulatus), this protein is 2-hydroxymuconate tautomerase (nahJ).